We begin with the raw amino-acid sequence, 269 residues long: tRNA pseudouridine synthase A (269 aa).

The active-site Nucleophile is Asp-51. Tyr-109 lines the substrate pocket.

This sequence belongs to the tRNA pseudouridine synthase TruA family. As to quaternary structure, homodimer.

It catalyses the reaction uridine(38/39/40) in tRNA = pseudouridine(38/39/40) in tRNA. In terms of biological role, formation of pseudouridine at positions 38, 39 and 40 in the anticodon stem and loop of transfer RNAs. This Aeromonas hydrophila subsp. hydrophila (strain ATCC 7966 / DSM 30187 / BCRC 13018 / CCUG 14551 / JCM 1027 / KCTC 2358 / NCIMB 9240 / NCTC 8049) protein is tRNA pseudouridine synthase A.